Reading from the N-terminus, the 517-residue chain is Crotonobetaine/carnitine--CoA ligase (517 aa).

It belongs to the ATP-dependent AMP-binding enzyme family.

The enzyme catalyses 4-(trimethylamino)butanoate + ATP + CoA = 4-(trimethylamino)butanoyl-CoA + AMP + diphosphate. It catalyses the reaction crotonobetaine + ATP + CoA = crotonobetainyl-CoA + AMP + diphosphate. The catalysed reaction is (R)-carnitine + ATP + CoA = (R)-carnitinyl-CoA + AMP + diphosphate. It functions in the pathway amine and polyamine metabolism; carnitine metabolism. In terms of biological role, catalyzes the transfer of CoA to carnitine, generating the initial carnitinyl-CoA needed for the CaiB reaction cycle. Also has activity toward crotonobetaine and gamma-butyrobetaine. The sequence is that of Crotonobetaine/carnitine--CoA ligase from Escherichia coli (strain SE11).